A 98-amino-acid chain; its full sequence is Integration host factor subunit alpha (98 aa).

Positions F52–I73 are disordered.

It belongs to the bacterial histone-like protein family. Heterodimer of an alpha and a beta chain.

This protein is one of the two subunits of integration host factor, a specific DNA-binding protein that functions in genetic recombination as well as in transcriptional and translational control. The polypeptide is Integration host factor subunit alpha (Aeromonas hydrophila subsp. hydrophila (strain ATCC 7966 / DSM 30187 / BCRC 13018 / CCUG 14551 / JCM 1027 / KCTC 2358 / NCIMB 9240 / NCTC 8049)).